Reading from the N-terminus, the 689-residue chain is Glycine--tRNA ligase beta subunit (689 aa).

This sequence belongs to the class-II aminoacyl-tRNA synthetase family. As to quaternary structure, tetramer of two alpha and two beta subunits.

It localises to the cytoplasm. It carries out the reaction tRNA(Gly) + glycine + ATP = glycyl-tRNA(Gly) + AMP + diphosphate. The chain is Glycine--tRNA ligase beta subunit from Shewanella sediminis (strain HAW-EB3).